Consider the following 215-residue polypeptide: Large ribosomal subunit protein bL25 (215 aa).

Positions 192–203 (EEATEEEEEAAE) are enriched in acidic residues. The segment at 192–215 (EEATEEEEEAAEPEVIKRKEEEEE) is disordered. Residues 205-215 (EVIKRKEEEEE) show a composition bias toward basic and acidic residues.

The protein belongs to the bacterial ribosomal protein bL25 family. CTC subfamily. As to quaternary structure, part of the 50S ribosomal subunit; part of the 5S rRNA/L5/L18/L25 subcomplex. Contacts the 5S rRNA. Binds to the 5S rRNA independently of L5 and L18.

This is one of the proteins that binds to the 5S RNA in the ribosome where it forms part of the central protuberance. The protein is Large ribosomal subunit protein bL25 of Thermotoga sp. (strain RQ2).